The chain runs to 176 residues: 3-hydroxyanthranilate 3,4-dioxygenase (176 aa).

An O2-binding site is contributed by Arg44. Fe cation contacts are provided by His48, Glu54, and His92. Glu54 contacts substrate. Residues Arg96 and Glu106 each contribute to the substrate site. Fe cation is bound by residues Cys121, Cys124, Cys158, and Cys161.

Belongs to the 3-HAO family. In terms of assembly, homodimer. Requires Fe(2+) as cofactor.

It carries out the reaction 3-hydroxyanthranilate + O2 = (2Z,4Z)-2-amino-3-carboxymuconate 6-semialdehyde. It participates in cofactor biosynthesis; NAD(+) biosynthesis; quinolinate from L-kynurenine: step 3/3. Catalyzes the oxidative ring opening of 3-hydroxyanthranilate to 2-amino-3-carboxymuconate semialdehyde, which spontaneously cyclizes to quinolinate. The chain is 3-hydroxyanthranilate 3,4-dioxygenase from Xanthomonas campestris pv. campestris (strain 8004).